A 1535-amino-acid chain; its full sequence is Putative protein TIC 214 C-terminal part (1535 aa).

Disordered regions lie at residues 264-283 (ENQKKNGKQPVDTIKNNSND), 312-333 (EQQEEENPEESTGNPGIRSRKA), and 1263-1282 (DYKESDIQKPRTKAQSKNNK).

The protein belongs to the TIC214 family. As to quaternary structure, part of the Tic complex.

The protein resides in the plastid. Its subcellular location is the chloroplast. In terms of biological role, involved in protein precursor import into chloroplasts. May be part of an intermediate translocation complex acting as a protein-conducting channel at the inner envelope. The polypeptide is Putative protein TIC 214 C-terminal part (Piper cenocladum (Ant piper)).